A 156-amino-acid polypeptide reads, in one-letter code: Transcriptional regulator MraZ (156 aa).

2 SpoVT-AbrB domains span residues 7-54 (NIEV…PESV) and 84-127 (VEVV…AKER).

This sequence belongs to the MraZ family. In terms of assembly, forms oligomers.

It localises to the cytoplasm. Its subcellular location is the nucleoid. This is Transcriptional regulator MraZ from Bacteroides thetaiotaomicron (strain ATCC 29148 / DSM 2079 / JCM 5827 / CCUG 10774 / NCTC 10582 / VPI-5482 / E50).